The following is a 599-amino-acid chain: Histone-arginine methyltransferase CARMER (599 aa).

The 308-residue stretch at 127–434 (ASQYFQFYGY…QRQSYDVEID (308 aa)) folds into the SAM-dependent MTase PRMT-type domain. S-adenosyl-L-methionine-binding residues include Q140, R149, G173, E195, E224, and T252. R487 bears the Asymmetric dimethylarginine; by autocatalysis mark.

The protein belongs to the class I-like SAM-binding methyltransferase superfamily. Protein arginine N-methyltransferase family. In terms of assembly, homodimer. Post-translationally, the dimethylated protein is the major form.

Its subcellular location is the cytoplasm. It is found in the nucleus. The enzyme catalyses L-arginyl-[protein] + 2 S-adenosyl-L-methionine = N(omega),N(omega)-dimethyl-L-arginyl-[protein] + 2 S-adenosyl-L-homocysteine + 2 H(+). Functionally, methylates (mono- and asymmetric dimethylation) the guanidino nitrogens of arginyl residues in proteins. May methylate histone H3 at 'Arg-17' and activate transcription via chromatin remodeling. The sequence is that of Histone-arginine methyltransferase CARMER (Art4) from Culex quinquefasciatus (Southern house mosquito).